The following is a 161-amino-acid chain: Phosphopantetheine adenylyltransferase (161 aa).

Position 9 (Ser-9) interacts with substrate. Residues 9-10 (SF) and His-17 contribute to the ATP site. Substrate contacts are provided by Lys-41, Leu-73, and Arg-87. Residues 88–90 (GIR), Glu-98, and 123–129 (TGFISST) contribute to the ATP site.

This sequence belongs to the bacterial CoaD family. In terms of assembly, homohexamer. It depends on Mg(2+) as a cofactor.

The protein localises to the cytoplasm. The enzyme catalyses (R)-4'-phosphopantetheine + ATP + H(+) = 3'-dephospho-CoA + diphosphate. Its pathway is cofactor biosynthesis; coenzyme A biosynthesis; CoA from (R)-pantothenate: step 4/5. Its function is as follows. Reversibly transfers an adenylyl group from ATP to 4'-phosphopantetheine, yielding dephospho-CoA (dPCoA) and pyrophosphate. This chain is Phosphopantetheine adenylyltransferase, found in Psychromonas ingrahamii (strain DSM 17664 / CCUG 51855 / 37).